Here is a 353-residue protein sequence, read N- to C-terminus: WD repeat-containing protein 55 (353 aa).

WD repeat units follow at residues 4-43 (DLGANAFGIDFHPSTNLVAAGLIDGHLHLYRYDSDSSLVR), 49-88 (AHKESCRAVRFIDDGQRIVTASADCSILATDVETGAQVAH), 92-130 (AHEDAVNTLINVTETTIASGDDKGCVKIWDTRQRSCSHE), 133-172 (AHEDYISGMTFASDSMKLVVTSGDGTLSVCNLRTSKVQSQ), 175-214 (FSEDELLSVVIMKNGRKVICGTQNGTLLLYSWGFFKDCSD), 218-257 (DLAPNSVDALLKLDEDRLITGCDNGIISLVGILPNRIIQP), and 260-299 (SHDYPIEDLALSHDKKFLGSTAHDSMLKLWNLEEILEGSN). Residues 300–353 (VNSGNASGAAEDSDSDNDGMDLDNDPSKSSKGSKRKTKSKANTLNATNNFFADL) form a disordered region. Acidic residues predominate over residues 310–323 (EDSDSDNDGMDLDN). Over residues 339-353 (KANTLNATNNFFADL) the composition is skewed to low complexity.

The protein belongs to the WD repeat WDR55 family. As to quaternary structure, interacts with DDB1A. In terms of tissue distribution, highly expressed in roots. Expressed in cotyledons, leaves, buds and flowers.

It localises to the nucleus. It is found in the cytoplasm. In terms of biological role, required for male and female gametogenesis, seed development, and embryo and endosperm development at early stages. Involved in the establishment of bilateral symmetry in the transition from the globular to the heart embryo stage. May act in the frame of a CRL4 complex. Required for proper vegetative growth and organization of the adult plant body. May play a role in hormonal control of plant development. This Arabidopsis thaliana (Mouse-ear cress) protein is WD repeat-containing protein 55.